A 142-amino-acid polypeptide reads, in one-letter code: U1 small nuclear ribonucleoprotein C (142 aa).

The Matrin-type zinc-finger motif lies at 4 to 36; it reads YYCDYCDTFLTHDSPSVRKTHNGGRKHKDNVRM.

Belongs to the U1 small nuclear ribonucleoprotein C family. As to quaternary structure, U1 snRNP is composed of the 7 core Sm proteins B/B', D1, D2, D3, E, F and G that assemble in a heptameric protein ring on the Sm site of the small nuclear RNA to form the core snRNP, and at least 3 U1 snRNP-specific proteins U1-70K, U1-A and U1-C. U1-C interacts with U1 snRNA and the 5' splice-site region of the pre-mRNA.

It is found in the nucleus. Functionally, component of the spliceosomal U1 snRNP, which is essential for recognition of the pre-mRNA 5' splice-site and the subsequent assembly of the spliceosome. U1-C is directly involved in initial 5' splice-site recognition for both constitutive and regulated alternative splicing. The interaction with the 5' splice-site seems to precede base-pairing between the pre-mRNA and the U1 snRNA. Stimulates commitment or early (E) complex formation by stabilizing the base pairing of the 5' end of the U1 snRNA and the 5' splice-site region. The protein is U1 small nuclear ribonucleoprotein C of Caenorhabditis briggsae.